The sequence spans 319 residues: Alpha/beta-gliadin A-V (319 aa).

Residues 1–20 form the signal peptide; that stretch reads MKTFLILALLAIVATTATTA. Residues 28–58 show a composition bias toward low complexity; it reads LQPQNPSQQQPQEQVPLVQQQQFPGQQQQFP. Disordered stretches follow at residues 28–125 and 258–278; these read LQPQ…QQAQ and SQVS…VQPQ. 2 stretches are compositionally biased toward pro residues: residues 59 to 71 and 81 to 104; these read PQQP…PFPS and FPQP…PQQP. Residues 105-125 show a composition bias toward low complexity; sequence YPQQQPQYLQPQQPISQQQAQ. Residues 267–278 show a composition bias toward polar residues; sequence LNPQAQGSVQPQ.

It belongs to the gliadin/glutenin family. In terms of processing, substrate of transglutaminase.

Gliadin is the major seed storage protein in wheat. The sequence is that of Alpha/beta-gliadin A-V from Triticum aestivum (Wheat).